The sequence spans 44 residues: Cytochrome b559 subunit beta (44 aa).

The helical transmembrane segment at 19-35 (WLAVHTLGVPTVFFLGA) threads the bilayer. His23 contacts heme.

This sequence belongs to the PsbE/PsbF family. Heterodimer of an alpha subunit and a beta subunit. PSII is composed of 1 copy each of membrane proteins PsbA, PsbB, PsbC, PsbD, PsbE, PsbF, PsbH, PsbI, PsbJ, PsbK, PsbL, PsbM, PsbT, PsbX, PsbY, PsbZ, Psb30/Ycf12, peripheral proteins PsbO, CyanoQ (PsbQ), PsbU, PsbV and a large number of cofactors. It forms dimeric complexes. It depends on heme b as a cofactor.

The protein resides in the cellular thylakoid membrane. Functionally, this b-type cytochrome is tightly associated with the reaction center of photosystem II (PSII). PSII is a light-driven water:plastoquinone oxidoreductase that uses light energy to abstract electrons from H(2)O, generating O(2) and a proton gradient subsequently used for ATP formation. It consists of a core antenna complex that captures photons, and an electron transfer chain that converts photonic excitation into a charge separation. This chain is Cytochrome b559 subunit beta, found in Trichodesmium erythraeum (strain IMS101).